The chain runs to 285 residues: Nucleotide-binding protein NTHI1314 (285 aa).

ATP is bound at residue 8–15 (GRSGAGKS). Residue 56–59 (DIRN) participates in GTP binding.

The protein belongs to the RapZ-like family.

Functionally, displays ATPase and GTPase activities. The sequence is that of Nucleotide-binding protein NTHI1314 from Haemophilus influenzae (strain 86-028NP).